The sequence spans 274 residues: MRKVHVQKYLLTFLGIVLSLLWISPFYIILVNSFKTKLELFTNTLSLPKSLMLDNYKTAAANLNLSEAFSNTLIITVFSILIIAIFSSMTAYALQRVKRKSSVIIYMIFTVAMLIPFQSVMIPLVAEFGKFHFLTRSGLVFMYLGFGSSLGVFLYYGALKGIPTSLDEAALIDGCSRFRIYWNIILPLLNPTTITLAVLDIMWIWNDYLLPSLVINKVGSRTLPLMIFYFFSQYTKQWNLGMAGLTIAILPVVIFYFLAQRKLVTAIIAGAVKQ.

6 consecutive transmembrane segments (helical) span residues 11–31 (LTFLGIVLSLLWISPFYIILV), 73–93 (LIITVFSILIIAIFSSMTAYA), 103–123 (VIIYMIFTVAMLIPFQSVMIP), 139–159 (LVFMYLGFGSSLGVFLYYGAL), 184–204 (IILPLLNPTTITLAVLDIMWI), and 238–258 (WNLGMAGLTIAILPVVIFYFL). In terms of domain architecture, ABC transmembrane type-1 spans 69-259 (FSNTLIITVF…LPVVIFYFLA (191 aa)).

The protein belongs to the binding-protein-dependent transport system permease family. MalFG subfamily.

The protein resides in the cell membrane. Probably part of a binding-protein-dependent transport system starch degradation products. Probably responsible for the translocation of the substrate across the membrane. The sequence is that of Probable starch degradation products transport system permease protein AmyC (amyC) from Thermoanaerobacterium thermosulfurigenes (Clostridium thermosulfurogenes).